Consider the following 601-residue polypeptide: NADH-ubiquinone oxidoreductase chain 5 (601 aa).

17 helical membrane-spanning segments follow: residues 5–25, 37–54, 83–105, 112–129, 134–156, 169–189, 209–231, 240–260, 271–291, 300–320, 323–343, 363–383, 400–420, 451–471, 478–498, 508–528, and 581–601; these read ITSLMTNFCLITTILSLTLSF, YMRNAFIISLLPLIIYID, YCLTFFSIALYITWSIMQFSLWY, TLFFKYLTMFLISMLFFL, LLQLILGWEGMGIMSFLLINWWH, IIYNRIGDTGLIIFMIWSALF, WLPLLGIVLAATGKSAQFMLHPW, TPVSALLHSSTMVVSGVFLLI, MIISIILCLGAMTTLFAALCA, IIAFSTTSQLGLMTVTIGINQ, LAFLHMSTHAFFKALLFLCSA, LILPFTSSCTLISSLALMGMP, MSYVNAWALLSTMLATALTSI, PLIRLTLGSIIFGFIISTFFL, FSIPFNSKILPTIMLILVSSL, FSHMPPLFFPSMSGYFPAIFH, and NYITIFVITILSSLLTSALYF.

Belongs to the complex I subunit 5 family.

It localises to the mitochondrion inner membrane. The enzyme catalyses a ubiquinone + NADH + 5 H(+)(in) = a ubiquinol + NAD(+) + 4 H(+)(out). Its function is as follows. Core subunit of the mitochondrial membrane respiratory chain NADH dehydrogenase (Complex I) that is believed to belong to the minimal assembly required for catalysis. Complex I functions in the transfer of electrons from NADH to the respiratory chain. The immediate electron acceptor for the enzyme is believed to be ubiquinone. In Myxine glutinosa (Atlantic hagfish), this protein is NADH-ubiquinone oxidoreductase chain 5 (MT-ND5).